A 1205-amino-acid polypeptide reads, in one-letter code: PAN2-PAN3 deadenylation complex catalytic subunit Pan2 (1205 aa).

WD repeat units follow at residues 153–193 (DESE…QKYA), 195–231 (ETPG…VEHE), 244–280 (VHGN…AITP), and 328–367 (PVGP…SFNP). A linker region spans residues 368-484 (YSRETEFALP…PTGREEEPLH (117 aa)). The USP domain occupies 485–924 (TVSKKYRKVT…VPAILYYVKR (440 aa)). A Phosphoserine modification is found at serine 784. The 173-residue stretch at 975–1147 (VGLDAEFVTL…EDARTALQLY (173 aa)) folds into the Exonuclease domain. A divalent metal cation is bound by residues aspartate 978, glutamate 980, aspartate 1087, and aspartate 1139. Positions 1179–1205 (WKVPEPESQSSPKSKAGLRPGALGWVG) are disordered. The segment covering 1184–1193 (PESQSSPKSK) has biased composition (low complexity). A Phosphoserine modification is found at serine 1189.

Belongs to the peptidase C19 family. PAN2 subfamily. Forms a heterotrimer with an asymmetric homodimer of the regulatory subunit PAN3 to form the poly(A)-nuclease (PAN) deadenylation complex. Interacts with PAN3 isoform 1/Pan3L and isoform 3/Pan3S. Interacts with ZFP36. The cofactor is a divalent metal cation.

Its subcellular location is the cytoplasm. It localises to the P-body. The protein localises to the nucleus. It catalyses the reaction Exonucleolytic cleavage of poly(A) to 5'-AMP.. Its activity is regulated as follows. Positively regulated by the regulatory subunit PAN3. In terms of biological role, catalytic subunit of the poly(A)-nuclease (PAN) deadenylation complex, one of two cytoplasmic mRNA deadenylases involved in general and miRNA-mediated mRNA turnover. PAN specifically shortens poly(A) tails of RNA and the activity is stimulated by poly(A)-binding protein (PABP). PAN deadenylation is followed by rapid degradation of the shortened mRNA tails by the CCR4-NOT complex. Deadenylated mRNAs are then degraded by two alternative mechanisms, namely exosome-mediated 3'-5' exonucleolytic degradation, or deadenylation-dependent mRNA decaping and subsequent 5'-3' exonucleolytic degradation by XRN1. Also acts as an important regulator of the HIF1A-mediated hypoxic response. Required for HIF1A mRNA stability independent of poly(A) tail length regulation. This is PAN2-PAN3 deadenylation complex catalytic subunit Pan2 from Rattus norvegicus (Rat).